Here is a 441-residue protein sequence, read N- to C-terminus: Protein MPE1 (441 aa).

The DWNN domain maps to 5–78 (IFYRFKSQRN…STSVIVKRSP (74 aa)). Residues 180–197 (YMCYRCGGRDHWIKNCPT) form a CCHC-type zinc finger. Residue Ser221 is modified to Phosphoserine. Basic and acidic residues predominate over residues 355–364 (KKQEELHGSS). Residues 355–400 (KKQEELHGSSKDGNQPETKKMKLMDPTGTAGLNNNTSLPTSVNNGG) form a disordered region. Residues 384–400 (AGLNNNTSLPTSVNNGG) are compositionally biased toward polar residues.

Component of the cleavage and polyadenylation factor (CPF) complex, which is composed of PTI1, SYC1, SSU72, GLC7, MPE1, REF2, PFS2, PTA1, YSH1/BRR5, SWD2, CFT2/YDH1, YTH1, CFT1/YHH1, FIP1 and PAP1.

It is found in the nucleus. Functionally, component of the cleavage and polyadenylation factor (CPF) complex, which plays a key role in polyadenylation-dependent pre-mRNA 3'-end formation and cooperates with cleavage factors including the CFIA complex and NAB4/CFIB. This chain is Protein MPE1 (MPE1), found in Saccharomyces cerevisiae (strain ATCC 204508 / S288c) (Baker's yeast).